The sequence spans 508 residues: Steroid 17-alpha-hydroxylase/17,20 lyase (508 aa).

Residue N202 participates in substrate binding. A heme-binding site is contributed by C442.

The protein belongs to the cytochrome P450 family. The cofactor is heme.

Its subcellular location is the endoplasmic reticulum membrane. It localises to the microsome membrane. The catalysed reaction is a C21-steroid + reduced [NADPH--hemoprotein reductase] + O2 = a 17alpha-hydroxy-C21-steroid + oxidized [NADPH--hemoprotein reductase] + H2O + H(+). It catalyses the reaction progesterone + reduced [NADPH--hemoprotein reductase] + O2 = 17alpha-hydroxyprogesterone + oxidized [NADPH--hemoprotein reductase] + H2O + H(+). The enzyme catalyses pregnenolone + reduced [NADPH--hemoprotein reductase] + O2 = 17alpha-hydroxypregnenolone + oxidized [NADPH--hemoprotein reductase] + H2O + H(+). It carries out the reaction 17alpha-hydroxyprogesterone + reduced [NADPH--hemoprotein reductase] + O2 = androst-4-ene-3,17-dione + acetate + oxidized [NADPH--hemoprotein reductase] + H2O + 2 H(+). The catalysed reaction is 17alpha-hydroxyprogesterone + reduced [NADPH--hemoprotein reductase] + O2 = 16alpha,17alpha-dihydroxyprogesterone + oxidized [NADPH--hemoprotein reductase] + H2O + H(+). It catalyses the reaction 16alpha,17alpha-dihydroxyprogesterone + reduced [NADPH--hemoprotein reductase] + O2 = 6beta,16alpha,17alpha-trihydroxyprogesterone + oxidized [NADPH--hemoprotein reductase] + H2O + H(+). The enzyme catalyses 17alpha-hydroxypregnenolone + reduced [NADPH--hemoprotein reductase] + O2 = 3beta-hydroxyandrost-5-en-17-one + acetate + oxidized [NADPH--hemoprotein reductase] + H2O + 2 H(+). It carries out the reaction 16alpha,17alpha-dihydroxypregnenolone + reduced [NADPH--hemoprotein reductase] + O2 = 3beta,16alpha-dihydroxy-androst-5-en-17-one + acetate + oxidized [NADPH--hemoprotein reductase] + H2O + 2 H(+). The catalysed reaction is 3beta-hydroxyandrost-5-en-17-one + reduced [NADPH--hemoprotein reductase] + O2 = 3beta,16alpha-dihydroxy-androst-5-en-17-one + oxidized [NADPH--hemoprotein reductase] + H2O + H(+). It catalyses the reaction androst-4-ene-3,17-dione + reduced [NADPH--hemoprotein reductase] + O2 = 16alpha-hydroxyandrost-4-ene-3,17-dione + oxidized [NADPH--hemoprotein reductase] + H2O + H(+). Its pathway is steroid hormone biosynthesis. It functions in the pathway steroid biosynthesis; glucocorticoid biosynthesis. Regulated predominantly by intracellular cAMP levels. The 17,20-lyase activity is stimulated by cytochrome b5, which acts as an allosteric effector increasing the Vmax of the lyase activity. In terms of biological role, a cytochrome P450 monooxygenase involved in corticoid and androgen biosynthesis. Catalyzes 17-alpha hydroxylation of C21 steroids, which is common for both pathways. A second oxidative step, required only for androgen synthesis, involves an acyl-carbon cleavage. The 17-alpha hydroxy intermediates, as part of adrenal glucocorticoids biosynthesis pathway, are precursors of cortisol. Hydroxylates steroid hormones, pregnenolone and progesterone to form 17-alpha hydroxy metabolites, followed by the cleavage of the C17-C20 bond to form C19 steroids, dehydroepiandrosterone (DHEA) and androstenedione. Has 16-alpha hydroxylase activity. Catalyzes 16-alpha hydroxylation of 17-alpha hydroxy pregnenolone, followed by the cleavage of the C17-C20 bond to form 16-alpha-hydroxy DHEA. Also 16-alpha hydroxylates androgens, relevant for estriol synthesis. Mechanistically, uses molecular oxygen inserting one oxygen atom into a substrate, and reducing the second into a water molecule, with two electrons provided by NADPH via cytochrome P450 reductase (CPR; NADPH-ferrihemoprotein reductase). The polypeptide is Steroid 17-alpha-hydroxylase/17,20 lyase (CYP17A1) (Pan troglodytes (Chimpanzee)).